An 80-amino-acid polypeptide reads, in one-letter code: Small ribosomal subunit protein bS16 (80 aa).

Belongs to the bacterial ribosomal protein bS16 family.

This chain is Small ribosomal subunit protein bS16, found in Laribacter hongkongensis (strain HLHK9).